We begin with the raw amino-acid sequence, 96 residues long: Protein RnfH (96 aa).

The protein belongs to the UPF0125 (RnfH) family.

In Shigella flexneri, this protein is Protein RnfH.